Here is a 224-residue protein sequence, read N- to C-terminus: UPF0758 protein PFL_6051 (224 aa).

Positions 102–224 (ALENPLVVRD…PLSMAEYGWI (123 aa)) constitute an MPN domain. Residues H173, H175, and D186 each coordinate Zn(2+). The short motif at 173-186 (HNHPSGICEPSPAD) is the JAMM motif element.

It belongs to the UPF0758 family.

The sequence is that of UPF0758 protein PFL_6051 from Pseudomonas fluorescens (strain ATCC BAA-477 / NRRL B-23932 / Pf-5).